Here is a 346-residue protein sequence, read N- to C-terminus: MPSPLALRPYLPSEFSPSVDARPCSSPSELPAKLLLGATPPRAPRLPRRLAWCSIDWEQVCLLQRLGAGGFGSVYKATYHGVPVAIKQVNKCTKNRLASRRSFWAELNVARLRHDNIVRVVAASTRTPAGSNSLGTIIMEFGGNVTLHQVIYGAASHPEGDAGEPHCSTGGPLTLGKCLKYSLDVVNGLLFLHSQSIVHLDLKPANILISEQDVCKISDFGCSEKLEDLLCFQTPLYPLGGTYTHRAPELLKGEGVTPKADIYSFAITLWQMTTKQAPYSGERQHILYAVVAYDLRPSLSAAVFQDSLPGQRLGDVIRRCWRPSAAQRPSARPLLVDLTSLKAEFG.

A Protein kinase domain is found at 60-341 (VCLLQRLGAG…RPLLVDLTSL (282 aa)). ATP-binding positions include 66-74 (LGAGGFGSV) and Lys87. Residue Asp201 is the Proton acceptor of the active site.

The protein belongs to the protein kinase superfamily. Ser/Thr protein kinase family.

The enzyme catalyses L-seryl-[protein] + ATP = O-phospho-L-seryl-[protein] + ADP + H(+). It carries out the reaction L-threonyl-[protein] + ATP = O-phospho-L-threonyl-[protein] + ADP + H(+). The protein is Proto-oncogene serine/threonine-protein kinase mos of Chlorocebus aethiops (Green monkey).